We begin with the raw amino-acid sequence, 284 residues long: 2-dehydro-3-deoxyphosphooctonate aldolase (284 aa).

The protein belongs to the KdsA family.

Its subcellular location is the cytoplasm. The catalysed reaction is D-arabinose 5-phosphate + phosphoenolpyruvate + H2O = 3-deoxy-alpha-D-manno-2-octulosonate-8-phosphate + phosphate. It functions in the pathway carbohydrate biosynthesis; 3-deoxy-D-manno-octulosonate biosynthesis; 3-deoxy-D-manno-octulosonate from D-ribulose 5-phosphate: step 2/3. The protein operates within bacterial outer membrane biogenesis; lipopolysaccharide biosynthesis. This is 2-dehydro-3-deoxyphosphooctonate aldolase from Vibrio atlanticus (strain LGP32) (Vibrio splendidus (strain Mel32)).